Here is a 417-residue protein sequence, read N- to C-terminus: Creatine kinase U-type, mitochondrial (417 aa).

A mitochondrion-targeting transit peptide spans 1-39; the sequence is MAGPFSRLLSARPGLRLLALAGAGSLAAGFLLRPEPVRA. Residues 40-64 are cardiolipin-binding; sequence ASERRRLYPPSAEYPDLRKHNNCMA. The 87-residue stretch at 45–131 folds into the Phosphagen kinase N-terminal domain; that stretch reads RLYPPSAEYP…FDPVIQERHN (87 aa). The residue at position 151 (serine 151) is a Phosphoserine. Positions 158-400 constitute a Phosphagen kinase C-terminal domain; that stretch reads YVLSSRVRTG…NYLIDCERRL (243 aa). 161–165 is a binding site for ATP; the sequence is SSRVR. Serine 196 carries the post-translational modification Phosphoserine. Phosphothreonine is present on threonine 213. Histidine 224 contacts ATP. Serine 232 carries the post-translational modification Phosphoserine. ATP contacts are provided by residues arginine 269, arginine 325, 353–358, and aspartate 368; that span reads RGTGGV. Phosphothreonine is present on threonine 355.

It belongs to the ATP:guanido phosphotransferase family. As to quaternary structure, exists as an octamer composed of four MTCK homodimers.

Its subcellular location is the mitochondrion inner membrane. It carries out the reaction creatine + ATP = N-phosphocreatine + ADP + H(+). In terms of biological role, reversibly catalyzes the transfer of phosphate between ATP and various phosphogens (e.g. creatine phosphate). Creatine kinase isoenzymes play a central role in energy transduction in tissues with large, fluctuating energy demands, such as skeletal muscle, heart, brain and spermatozoa. The sequence is that of Creatine kinase U-type, mitochondrial (CKMT1A) from Homo sapiens (Human).